The chain runs to 72 residues: Large ribosomal subunit protein uL29 (72 aa).

Belongs to the universal ribosomal protein uL29 family.

The chain is Large ribosomal subunit protein uL29 from Prochlorococcus marinus (strain MIT 9301).